Here is a 138-residue protein sequence, read N- to C-terminus: Translation initiation factor 5A (138 aa).

Lys-37 is modified (hypusine).

Belongs to the eIF-5A family.

The protein resides in the cytoplasm. Functionally, functions by promoting the formation of the first peptide bond. The polypeptide is Translation initiation factor 5A (eif5a) (Pyrococcus horikoshii (strain ATCC 700860 / DSM 12428 / JCM 9974 / NBRC 100139 / OT-3)).